The sequence spans 163 residues: NADH-quinone oxidoreductase subunit I (163 aa).

4Fe-4S ferredoxin-type domains follow at residues 54 to 84 (LRRY…IESD) and 94 to 123 (TRYD…ETHI). [4Fe-4S] cluster is bound by residues Cys64, Cys67, Cys70, Cys74, Cys103, Cys106, Cys109, and Cys113.

Belongs to the complex I 23 kDa subunit family. In terms of assembly, NDH-1 is composed of 14 different subunits. Subunits NuoA, H, J, K, L, M, N constitute the membrane sector of the complex. Requires [4Fe-4S] cluster as cofactor.

The protein resides in the cell inner membrane. It carries out the reaction a quinone + NADH + 5 H(+)(in) = a quinol + NAD(+) + 4 H(+)(out). NDH-1 shuttles electrons from NADH, via FMN and iron-sulfur (Fe-S) centers, to quinones in the respiratory chain. The immediate electron acceptor for the enzyme in this species is believed to be ubiquinone. Couples the redox reaction to proton translocation (for every two electrons transferred, four hydrogen ions are translocated across the cytoplasmic membrane), and thus conserves the redox energy in a proton gradient. The protein is NADH-quinone oxidoreductase subunit I of Cupriavidus metallidurans (strain ATCC 43123 / DSM 2839 / NBRC 102507 / CH34) (Ralstonia metallidurans).